Reading from the N-terminus, the 114-residue chain is Histone H3-3 (114 aa).

The segment covering 1–17 (NTGGKAPRKHIAHKQAK) has biased composition (basic residues). The disordered stretch occupies residues 1–32 (NTGGKAPRKHIAHKQAKKSSAAAATGGVKKPH). The segment covering 18-28 (KSSAAAATGGV) has biased composition (low complexity).

Belongs to the histone H3 family. In terms of assembly, the nucleosome is a histone octamer containing two molecules each of H2A, H2B, H3 and H4 assembled in one H3-H4 heterotetramer and two H2A-H2B heterodimers. The octamer wraps approximately 147 bp of DNA.

Its subcellular location is the nucleus. It is found in the chromosome. In terms of biological role, core component of nucleosome. Nucleosomes wrap and compact DNA into chromatin, limiting DNA accessibility to the cellular machineries which require DNA as a template. Histones thereby play a central role in transcription regulation, DNA repair, DNA replication and chromosomal stability. DNA accessibility is regulated via a complex set of post-translational modifications of histones, also called histone code, and nucleosome remodeling. In Stylonychia lemnae (Ciliate), this protein is Histone H3-3 (H3-3).